We begin with the raw amino-acid sequence, 62 residues long: Large ribosomal subunit protein uL30 (62 aa).

This sequence belongs to the universal ribosomal protein uL30 family. In terms of assembly, part of the 50S ribosomal subunit.

This Polynucleobacter asymbioticus (strain DSM 18221 / CIP 109841 / QLW-P1DMWA-1) (Polynucleobacter necessarius subsp. asymbioticus) protein is Large ribosomal subunit protein uL30.